Consider the following 282-residue polypeptide: Cyanocobalamin reductase / alkylcobalamin dealkylase (282 aa).

Substrate contacts are provided by residues Asp-104, 115-118 (ILAQ), 129-131 (YYQ), Cys-149, and Ile-160. A disordered region spans residues 234 to 282 (LGLAQPSEKPSSPSPDLPFTTPAPKKPGNPSRARSWLSPRVSPPASPGP). Phosphoserine is present on residues Ser-245, Ser-247, Ser-275, and Ser-279.

This sequence belongs to the MMACHC family. Monomer in the absence of bound substrate. Homodimer; dimerization is triggered by binding to FMN or adenosylcobalamin. Interacts with LMBRD1 and ABCD4; the interaction ensures the transport of cobalamin from the lysosome to the cytoplasm. Forms a multiprotein complex with MMADHC, MTR and MTRR; the interaction with MTR could modulate MMACHC-dependent processing of cobalamin. Heterodimer with MMADHC; the interaction might play a role in the regulation of the balance between AdoCbl and MeCbl synthesis. FAD serves as cofactor. Requires FMN as cofactor. As to expression, widely expressed. Expressed at higher level in fetal liver. Also expressed in spleen, lymph node, thymus and bone marrow. Weakly or not expressed in peripheral blood leukocytes.

It is found in the cytoplasm. It localises to the cytosol. It catalyses the reaction 2 cob(II)alamin-[cyanocobalamin reductase] + 2 hydrogen cyanide + NADP(+) = 2 cyanocob(III)alamin + 2 apo-[cyanocobalamin reductase] + NADPH + H(+). It carries out the reaction apo-[alkylcobalamin reductase] + an R-cob(III)alamin + glutathione = cob(I)alamin-[alkylcobalamin reductase] + an S-substituted glutathione + H(+). The enzyme catalyses apo-[alkylcobalamin reductase] + methylcob(III)alamin + glutathione = S-methyl glutathione + cob(I)alamin-[alkylcobalamin reductase] + H(+). The catalysed reaction is apo-[alkylcobalamin reductase] + adenosylcob(III)alamin + glutathione = S-adenosylglutathione + cob(I)alamin-[alkylcobalamin reductase] + H(+). Functionally, cobalamin (vitamin B12) cytosolic chaperone that catalyzes the reductive decyanation of cyanocob(III)alamin (cyanocobalamin, CNCbl) to yield cob(II)alamin and cyanide, using FAD or FMN as cofactors and NADPH as cosubstrate. Cyanocobalamin constitutes the inactive form of vitamin B12 introduced from the diet, and is converted into the active cofactors methylcobalamin (MeCbl) involved in methionine biosynthesis, and 5'-deoxyadenosylcobalamin (AdoCbl) involved in the TCA cycle. Forms a complex with the lysosomal transporter ABCD4 and its chaperone LMBRD1, to transport cobalamin across the lysosomal membrane into the cytosol. The processing of cobalamin in the cytosol occurs in a multiprotein complex composed of at least MMACHC, MMADHC, MTRR (methionine synthase reductase) and MTR (methionine synthase) which may contribute to shuttle safely and efficiently cobalamin towards MTR in order to produce methionine. Also acts as a glutathione transferase by catalyzing the dealkylation of the alkylcob(III)alamins MeCbl and AdoCbl, using the thiolate of glutathione for nucleophilic displacement to generate cob(I)alamin and the corresponding glutathione thioether. The conversion of incoming MeCbl or AdoCbl into a common intermediate cob(I)alamin is necessary to meet the cellular needs for both cofactors. Cysteine and homocysteine cannot substitute for glutathione in this reaction. The chain is Cyanocobalamin reductase / alkylcobalamin dealkylase from Homo sapiens (Human).